We begin with the raw amino-acid sequence, 1153 residues long: ATP-dependent helicase/deoxyribonuclease subunit B (1153 aa).

The 289-residue stretch at 1–289 (MELNAYIGRA…KHLEQNFNAL (289 aa)) folds into the UvrD-like helicase ATP-binding domain. 8–15 (GRAGTGKS) contributes to the ATP binding site. Residues 269 to 583 (LDVQRFIHND…SIGTMDLAKV (315 aa)) enclose the UvrD-like helicase C-terminal domain. The [4Fe-4S] cluster site is built by Cys-784, Cys-1110, Cys-1113, and Cys-1119.

Belongs to the helicase family. AddB/RexB type 1 subfamily. As to quaternary structure, heterodimer of AddA and AddB. Mg(2+) is required as a cofactor. The cofactor is [4Fe-4S] cluster.

The heterodimer acts as both an ATP-dependent DNA helicase and an ATP-dependent, dual-direction single-stranded exonuclease. Recognizes the chi site generating a DNA molecule suitable for the initiation of homologous recombination. The AddB subunit has 5' -&gt; 3' nuclease activity but not helicase activity. The sequence is that of ATP-dependent helicase/deoxyribonuclease subunit B from Staphylococcus saprophyticus subsp. saprophyticus (strain ATCC 15305 / DSM 20229 / NCIMB 8711 / NCTC 7292 / S-41).